The primary structure comprises 362 residues: Thiol protease aleurain (362 aa).

The N-terminal stretch at 1 to 22 (MAHARVLLLALAVLATAAVAVA) is a signal peptide. A propeptide spans 23–143 (SSSSFADSNP…GNHLMRDAAA (121 aa)) (activation peptide). Intrachain disulfides connect Cys-165/Cys-208 and Cys-199/Cys-241. Cys-168 is an active-site residue. N-linked (GlcNAc...) asparagine glycosylation occurs at Asn-188. N-linked (GlcNAc...) asparagine glycosylation is present at Asn-257. Cys-299 and Cys-349 are oxidised to a cystine. Active-site residues include His-308 and Asn-328.

This sequence belongs to the peptidase C1 family.

The protein localises to the vacuole. The catalysed reaction is Hydrolysis of proteins, acting as an aminopeptidase (notably, cleaving Arg-|-Xaa bonds) as well as an endopeptidase.. Its function is as follows. May play a role in proteolysis leading to mobilization of nitrogen during senescence and starvation. This Hordeum vulgare (Barley) protein is Thiol protease aleurain.